Reading from the N-terminus, the 449-residue chain is Tapasin (449 aa).

The first 20 residues, 1–20 (MKPLSLLLAVASALGTAVSA), serve as a signal peptide directing secretion. Over 21 to 413 (GPAVIECWMV…GLSGPSLEDS (393 aa)) the chain is Lumenal. A disulfide bridge links Cys27 with Cys91. Residue Asn253 is glycosylated (N-linked (GlcNAc...) asparagine). Residues 292-399 (PKISLTPAPL…PTLGRSAEVT (108 aa)) form the Ig-like C1-type domain. Cys315 and Cys382 are joined by a disulfide. A helical membrane pass occupies residues 414–434 (VGLFLSAFLLLGLIKALGWVA). At 435–449 (ASRSTSKDPKEKKAQ) the chain is on the cytoplasmic side.

In terms of assembly, heterodimer with PDIA3; disulfide-linked. Obligatory mediator for the interaction between newly assembled MHC class I molecules, calreticulin, PDIA3 and TAP. Up to 4 MHC class I/tapasin complexes bind to 1 TAP. Interacts with HLA-G-B2M complex; this interaction is required for loading of high affinity peptides. On its own or as part of MHC class I peptide loading complex, interacts with ligand-free MR1 or MR1-B2M complex, providing for stable MR1 pools ready for metabolite antigen processing.

It localises to the endoplasmic reticulum membrane. Involved in the association of MHC class I with transporter associated with antigen processing (TAP) and in the assembly of MHC class I with peptide (peptide loading). The chain is Tapasin (TAPBP) from Canis lupus familiaris (Dog).